The chain runs to 93 residues: Large ribosomal subunit protein uL23 (93 aa).

This sequence belongs to the universal ribosomal protein uL23 family. As to quaternary structure, part of the 50S ribosomal subunit. Contacts protein L29, and trigger factor when it is bound to the ribosome.

Functionally, one of the early assembly proteins it binds 23S rRNA. One of the proteins that surrounds the polypeptide exit tunnel on the outside of the ribosome. Forms the main docking site for trigger factor binding to the ribosome. In Campylobacter hominis (strain ATCC BAA-381 / DSM 21671 / CCUG 45161 / LMG 19568 / NCTC 13146 / CH001A), this protein is Large ribosomal subunit protein uL23.